We begin with the raw amino-acid sequence, 73 residues long: Large ribosomal subunit protein bL31 (73 aa).

The protein belongs to the bacterial ribosomal protein bL31 family. Type A subfamily. As to quaternary structure, part of the 50S ribosomal subunit.

Functionally, binds the 23S rRNA. In Rhodospirillum centenum (strain ATCC 51521 / SW), this protein is Large ribosomal subunit protein bL31.